A 327-amino-acid polypeptide reads, in one-letter code: Deaminated glutathione amidase (327 aa).

The N-terminal 13 residues, Met-1–Leu-13, are a transit peptide targeting the mitochondrion. Positions Leu-46–Leu-298 constitute a CN hydrolase domain. Glu-86 acts as the Proton acceptor in catalysis. The active-site Proton donor is Lys-161. Residue Cys-203 is the Nucleophile of the active site.

It belongs to the carbon-nitrogen hydrolase superfamily. NIT1/NIT2 family. In terms of tissue distribution, detected in heart, brain, placenta, liver, skeletal muscle, kidney and pancreas.

It is found in the mitochondrion. It localises to the cytoplasm. The enzyme catalyses N-(4-oxoglutaryl)-L-cysteinylglycine + H2O = L-cysteinylglycine + 2-oxoglutarate. In terms of biological role, catalyzes the hydrolysis of the amide bond in N-(4-oxoglutarate)-L-cysteinylglycine (deaminated glutathione), a metabolite repair reaction to dispose of the harmful deaminated glutathione. Plays a role in cell growth and apoptosis: loss of expression promotes cell growth, resistance to DNA damage stress and increased incidence to NMBA-induced tumors. Has tumor suppressor properties that enhances the apoptotic responsiveness in cancer cells; this effect is additive to the tumor suppressor activity of FHIT. It is also a negative regulator of primary T-cells. The sequence is that of Deaminated glutathione amidase (NIT1) from Homo sapiens (Human).